The sequence spans 376 residues: Zinc finger CCCH domain-containing protein C337.12 (376 aa).

Residues 2-25 are a coiled coil; that stretch reads NEQQLLENIASLAGAINQYKNEKE. The disordered stretch occupies residues 60–95; it reads SKSTAASPPYVIPSTSSNADDANKEPEKQSTSDYVS. Positions 80–89 are enriched in basic and acidic residues; it reads DANKEPEKQS. Residues 105–140 adopt a coiled-coil conformation; the sequence is KKNILEHDLQARKANLESYRAKLEKEYKTLAENKIQ. C3H1-type zinc fingers lie at residues 202–228, 229–256, 257–283, and 284–312; these read SPSA…FVHE, PTRK…HELD, PRRI…HIHY, and SENA…HILQ. The interval 347-376 is disordered; sequence SKTAGSINPEDSGSEIGSNSLESNLDFISV. Residues 349 to 369 show a composition bias toward polar residues; that stretch reads TAGSINPEDSGSEIGSNSLES.

It localises to the nucleus. This Schizosaccharomyces pombe (strain 972 / ATCC 24843) (Fission yeast) protein is Zinc finger CCCH domain-containing protein C337.12.